The following is a 739-amino-acid chain: Endoglucanase F (739 aa).

Residues 1-27 (MKKILAFLLTVALVAVVAIPQAVVSFA) form the signal peptide. The interval 28–470 (ADFNYGEALQ…AKMYEKYGGE (443 aa)) is catalytic. Catalysis depends on Asp84, which acts as the Nucleophile. Catalysis depends on residues His400, Asp438, and Glu447. In terms of domain architecture, CBM3 spans 480–639 (TPGEEFYVEA…NVRVWGKVPD (160 aa)). Positions 664 to 737 (PGIMLGDVNF…ILKLIEKFPA (74 aa)) constitute a Dockerin domain.

This sequence belongs to the glycosyl hydrolase 9 (cellulase E) family. Ca(2+) is required as a cofactor.

The enzyme catalyses Endohydrolysis of (1-&gt;4)-beta-D-glucosidic linkages in cellulose, lichenin and cereal beta-D-glucans.. Its function is as follows. This enzyme catalyzes the endohydrolysis of 1,4-beta-glucosidic linkages in cellulose, lichenin and cereal beta-D-glucans. The protein is Endoglucanase F (celF) of Acetivibrio thermocellus (strain ATCC 27405 / DSM 1237 / JCM 9322 / NBRC 103400 / NCIMB 10682 / NRRL B-4536 / VPI 7372) (Clostridium thermocellum).